The chain runs to 358 residues: Trace amine-associated receptor 7a (358 aa).

The Extracellular segment spans residues 1 to 47 (MDKLVDHFLSDQSRTMNEDLFSATSTELCYENLNRSCVRSPYSPGPR). The N-linked (GlcNAc...) asparagine glycan is linked to N34. Intrachain disulfides connect C37-C201 and C120-C205. The helical transmembrane segment at 48-68 (LILYAVFGFGAALAVCGNLLV) threads the bilayer. The Cytoplasmic segment spans residues 69 to 83 (MTSILHFRQLHSPAN). The helical transmembrane segment at 84-104 (FLVASLACADFLVGLTVMPFS) threads the bilayer. The Extracellular portion of the chain corresponds to 105–121 (TVRSVEGCWYFGESYCK). A helical transmembrane segment spans residues 122–143 (FHSCFEGSFCYSSIFHLCFISV). At 144–166 (DRYIAVSDPLTYPTRFTASVSGK) the chain is on the cytoplasmic side. Residues 167 to 187 (CITFSWLLSIIYSFSLLYTGA) traverse the membrane as a helical segment. Residues 188–212 (NEAGLEDLVSVLTCVGGCQIAVNQS) lie on the Extracellular side of the membrane. N210 carries N-linked (GlcNAc...) asparagine glycosylation. A helical membrane pass occupies residues 213–233 (WVFINFLLFLIPTLVMMTVYS). Residues 234–274 (KIFLIAKQQAQNIEKMSKQTARASESYKDRVAKRERKAAKT) are Cytoplasmic-facing. A helical transmembrane segment spans residues 275–295 (LGIAVAAFLLSWLPYFIDSII). Topologically, residues 296–309 (DAFLGFITPTYVYE) are extracellular. The helical transmembrane segment at 310 to 333 (ILVWIAYYNSAMNPLIYAFFYPWF) threads the bilayer. Topologically, residues 334–358 (RKAIKLIVTGKILRENSSTTNLFPE) are cytoplasmic.

Belongs to the G-protein coupled receptor 1 family. In terms of tissue distribution, specifically expressed in neurons of the olfactory epithelium.

The protein localises to the cell membrane. Olfactory receptor specific for N,N-dimethylalkylamines trace amines. Trace amine compounds are enriched in animal body fluids and act on trace amine-associated receptors (TAARs) to elicit both intraspecific and interspecific innate behaviors. Ligand-binding causes a conformation change that triggers signaling via G(s)-class of G alpha proteins (GNAL or GNAS). The protein is Trace amine-associated receptor 7a of Mus musculus (Mouse).